A 135-amino-acid polypeptide reads, in one-letter code: MAALRPLVKPKIVKKRTKKFIRHQSDRYVKIKWNWRKPRGIDNRVRRRFKGQILMPNIGYRSNKKTKHTLSSGFRKFLVHNIKEPEVLLMCNKSYRAEIAHNVSSKNRKAIVERAAQLAIRVTNPNTRLHSEENE.

Belongs to the eukaryotic ribosomal protein eL32 family.

The sequence is that of Putative large ribosomal subunit protein eL32' (Rpl32-ps) from Mus musculus (Mouse).